Consider the following 570-residue polypeptide: Proline--tRNA ligase (570 aa).

This sequence belongs to the class-II aminoacyl-tRNA synthetase family. ProS type 1 subfamily. Homodimer.

The protein resides in the cytoplasm. It catalyses the reaction tRNA(Pro) + L-proline + ATP = L-prolyl-tRNA(Pro) + AMP + diphosphate. Functionally, catalyzes the attachment of proline to tRNA(Pro) in a two-step reaction: proline is first activated by ATP to form Pro-AMP and then transferred to the acceptor end of tRNA(Pro). As ProRS can inadvertently accommodate and process non-cognate amino acids such as alanine and cysteine, to avoid such errors it has two additional distinct editing activities against alanine. One activity is designated as 'pretransfer' editing and involves the tRNA(Pro)-independent hydrolysis of activated Ala-AMP. The other activity is designated 'posttransfer' editing and involves deacylation of mischarged Ala-tRNA(Pro). The misacylated Cys-tRNA(Pro) is not edited by ProRS. This Geobacter metallireducens (strain ATCC 53774 / DSM 7210 / GS-15) protein is Proline--tRNA ligase.